Consider the following 367-residue polypeptide: UDP-N-acetylenolpyruvoylglucosamine reductase (367 aa).

The FAD-binding PCMH-type domain maps to 29–205 (VGPVAQRVIT…LEVEFKLDAS (177 aa)). The active site involves R177. S260 functions as the Proton donor in the catalytic mechanism. E359 is an active-site residue.

Belongs to the MurB family. Requires FAD as cofactor.

It is found in the cytoplasm. The enzyme catalyses UDP-N-acetyl-alpha-D-muramate + NADP(+) = UDP-N-acetyl-3-O-(1-carboxyvinyl)-alpha-D-glucosamine + NADPH + H(+). It functions in the pathway cell wall biogenesis; peptidoglycan biosynthesis. Cell wall formation. This Mycobacterium leprae (strain Br4923) protein is UDP-N-acetylenolpyruvoylglucosamine reductase.